The chain runs to 267 residues: Hydroxyethylthiazole kinase 2 (267 aa).

M41 lines the substrate pocket. ATP contacts are provided by K116 and T166. G193 is a substrate binding site.

This sequence belongs to the Thz kinase family. Mg(2+) serves as cofactor.

The enzyme catalyses 5-(2-hydroxyethyl)-4-methylthiazole + ATP = 4-methyl-5-(2-phosphooxyethyl)-thiazole + ADP + H(+). It participates in cofactor biosynthesis; thiamine diphosphate biosynthesis; 4-methyl-5-(2-phosphoethyl)-thiazole from 5-(2-hydroxyethyl)-4-methylthiazole: step 1/1. Functionally, catalyzes the phosphorylation of the hydroxyl group of 4-methyl-5-beta-hydroxyethylthiazole (THZ). In Streptococcus pneumoniae (strain P1031), this protein is Hydroxyethylthiazole kinase 2.